We begin with the raw amino-acid sequence, 264 residues long: S-adenosylmethionine decarboxylase proenzyme (264 aa).

S112 (schiff-base intermediate with substrate; via pyruvic acid) is an active-site residue. Residue S112 is modified to Pyruvic acid (Ser); by autocatalysis. H117 acts as the Proton acceptor; for processing activity in catalysis. Residue C140 is the Proton donor; for catalytic activity of the active site.

Belongs to the prokaryotic AdoMetDC family. Type 2 subfamily. In terms of assembly, heterooctamer of four alpha and four beta chains arranged as a tetramer of alpha/beta heterodimers. It depends on pyruvate as a cofactor. In terms of processing, is synthesized initially as an inactive proenzyme. Formation of the active enzyme involves a self-maturation process in which the active site pyruvoyl group is generated from an internal serine residue via an autocatalytic post-translational modification. Two non-identical subunits are generated from the proenzyme in this reaction, and the pyruvate is formed at the N-terminus of the alpha chain, which is derived from the carboxyl end of the proenzyme. The post-translation cleavage follows an unusual pathway, termed non-hydrolytic serinolysis, in which the side chain hydroxyl group of the serine supplies its oxygen atom to form the C-terminus of the beta chain, while the remainder of the serine residue undergoes an oxidative deamination to produce ammonia and the pyruvoyl group blocking the N-terminus of the alpha chain.

It carries out the reaction S-adenosyl-L-methionine + H(+) = S-adenosyl 3-(methylsulfanyl)propylamine + CO2. It participates in amine and polyamine biosynthesis; S-adenosylmethioninamine biosynthesis; S-adenosylmethioninamine from S-adenosyl-L-methionine: step 1/1. In terms of biological role, catalyzes the decarboxylation of S-adenosylmethionine to S-adenosylmethioninamine (dcAdoMet), the propylamine donor required for the synthesis of the polyamines spermine and spermidine from the diamine putrescine. The protein is S-adenosylmethionine decarboxylase proenzyme of Photorhabdus laumondii subsp. laumondii (strain DSM 15139 / CIP 105565 / TT01) (Photorhabdus luminescens subsp. laumondii).